The primary structure comprises 453 residues: uncharacterized protein (453 aa).

Cys-74, Cys-80, Cys-83, and Cys-162 together coordinate [4Fe-4S] cluster. The S-adenosyl-L-methionine site is built by Gln-286, Tyr-315, Glu-336, and Asp-384. Residue Cys-411 is the Nucleophile of the active site.

The protein belongs to the class I-like SAM-binding methyltransferase superfamily. RNA M5U methyltransferase family.

This is an uncharacterized protein from Staphylococcus aureus (strain Mu50 / ATCC 700699).